The sequence spans 593 residues: Aspartate--tRNA(Asp/Asn) ligase (593 aa).

Residue glutamate 182 coordinates L-aspartate. An aspartate region spans residues 206–209 (QLFK). L-aspartate is bound at residue arginine 228. ATP is bound by residues 228–230 (RDE) and glutamine 237. Histidine 455 contacts L-aspartate. Glutamate 489 is an ATP binding site. Residue arginine 496 coordinates L-aspartate. 541–544 (GLDR) is a binding site for ATP.

This sequence belongs to the class-II aminoacyl-tRNA synthetase family. Type 1 subfamily. Homodimer.

It localises to the cytoplasm. It carries out the reaction tRNA(Asx) + L-aspartate + ATP = L-aspartyl-tRNA(Asx) + AMP + diphosphate. Its function is as follows. Aspartyl-tRNA synthetase with relaxed tRNA specificity since it is able to aspartylate not only its cognate tRNA(Asp) but also tRNA(Asn). Reaction proceeds in two steps: L-aspartate is first activated by ATP to form Asp-AMP and then transferred to the acceptor end of tRNA(Asp/Asn). This chain is Aspartate--tRNA(Asp/Asn) ligase, found in Geotalea uraniireducens (strain Rf4) (Geobacter uraniireducens).